The primary structure comprises 434 residues: Elongation factor 1-alpha (434 aa).

Positions 5–232 constitute a tr-type G domain; that stretch reads KPHINLVVIG…DNVHPPKRPV (228 aa). Positions 14–21 are G1; the sequence is GHVVAGKS. GTP is bound at residue 14-21; sequence GHVVAGKS. Residues 70 to 74 form a G2 region; sequence GITID. The tract at residues 91-94 is G3; that stretch reads DAPG. GTP-binding positions include 91 to 95 and 153 to 156; these read DAPGH and NKMD. Positions 153-156 are G4; sequence NKMD. Positions 196–198 are G5; the sequence is SGF.

The protein belongs to the TRAFAC class translation factor GTPase superfamily. Classic translation factor GTPase family. EF-Tu/EF-1A subfamily.

The protein localises to the cytoplasm. This protein promotes the GTP-dependent binding of aminoacyl-tRNA to the A-site of ribosomes during protein biosynthesis. This is Elongation factor 1-alpha from Blastocystis hominis.